The sequence spans 99 residues: MSCQQNQQQCQPPPKCPIPKYPPKCPSKCASSCPPPISSCCGSSSGGCGCCSSEGGGCCLSHHRHHRSHCHRPKSSNCYGSGSGQQSGGSGCCSGGGCC.

The disordered stretch occupies residues Cys-78–Cys-99. The segment covering Ser-81–Cys-99 has biased composition (gly residues).

The protein belongs to the LCE family. Interacts with CYSRT1; the interaction is direct. As to expression, skin-specific. Expression was readily detected in adult trunk skin, adult arm skin, fetal skin, penal skin, vulva, esophagus and tongue. Not expressed in the cervix, rectum, lung, colon, or placenta.

Its function is as follows. Precursors of the cornified envelope of the stratum corneum. This Homo sapiens (Human) protein is Late cornified envelope protein 4A (LCE4A).